The following is a 402-amino-acid chain: MFSGALNYMKGLVGTNENLQVEESGDNKGDIEPEQRKGLLKQLSSYVGKDITSLISLPVWIFEPVSFLQVMSEPLQYNALLSKASKQDSEFLCLAYLAAFNCALYSTAVRTRKPFNPILGETFEIVDKKGEFRFLAEQVSHHPPIGVSETISEDYTLQLETLLKSKFYGNSSEVEIDGTNHFFNKKTNHHYTWNHLVTCCHNIIIGSLWLDHYGDLVIENHTTGSKAVLKFAKSGWLGAGRYGVTGEIVDCEGDVRYRITGKWNESIQLFQVMDNGSSSTTSTCLWEASKEPINNKFLFPRWVEENVIDLNDEYKKILPVTDSRLRADRIALEEGNLDVAAKEKHNLEEKQREDKRQRVAENKEWETAQFKKVDDAKFGYRWNYCGNYWEEREERVKAAASN.

Positions 328 to 361 (DRIALEEGNLDVAAKEKHNLEEKQREDKRQRVAE) form a coiled coil.

This sequence belongs to the OSBP family.

This is Oxysterol-binding protein 8 (osbH) from Dictyostelium discoideum (Social amoeba).